The sequence spans 319 residues: Peroxidase 62 (319 aa).

The N-terminal stretch at 1 to 22 is a signal peptide; the sequence is MGLVRSFALVIVFLSCLIAVYG. 4 cysteine pairs are disulfide-bonded: Cys34/Cys110, Cys67/Cys72, Cys116/Cys315, and Cys195/Cys226. The active-site Proton acceptor is His65. Ca(2+) contacts are provided by Asp66, Val69, Gly71, Asp73, and Ser75. Pro157 serves as a coordination point for substrate. Heme b is bound at residue His188. Ca(2+) is bound at residue Thr189. The N-linked (GlcNAc...) asparagine glycan is linked to Asn204. Residues Asp239, Ser242, and Asp247 each coordinate Ca(2+). N-linked (GlcNAc...) asparagine glycosylation is present at Asn253.

The protein belongs to the peroxidase family. Classical plant (class III) peroxidase subfamily. Heme b serves as cofactor. It depends on Ca(2+) as a cofactor. As to expression, mainly expressed in roots.

The protein resides in the secreted. The enzyme catalyses 2 a phenolic donor + H2O2 = 2 a phenolic radical donor + 2 H2O. Functionally, removal of H(2)O(2), oxidation of toxic reductants, biosynthesis and degradation of lignin, suberization, auxin catabolism, response to environmental stresses such as wounding, pathogen attack and oxidative stress. These functions might be dependent on each isozyme/isoform in each plant tissue. The polypeptide is Peroxidase 62 (PER62) (Arabidopsis thaliana (Mouse-ear cress)).